The following is a 538-amino-acid chain: Cytochrome c-552 (538 aa).

The signal sequence occupies residues 1 to 55 (MKIYLRFVWILIIILNFLLNLFITTNGVIIVNAFKKSLIVAASFASLSLFNSATA). Residue histidine 133 participates in heme c binding. Heme-binding residues include cysteine 161, cysteine 164, and lysine 165. Residues cysteine 199, cysteine 202, histidine 203, cysteine 264, cysteine 267, and histidine 268 each coordinate heme c. Residues glutamate 270, tyrosine 271, lysine 316, and glutamine 318 each contribute to the Ca(2+) site. Substrate is bound at residue tyrosine 271. A substrate-binding site is contributed by histidine 319. Heme c contacts are provided by histidine 330, cysteine 337, cysteine 340, histidine 341, histidine 356, cysteine 369, cysteine 372, histidine 373, and histidine 448.

Belongs to the cytochrome c-552 family. Ca(2+) serves as cofactor. Requires heme c as cofactor.

The protein resides in the periplasm. It catalyses the reaction 6 Fe(III)-[cytochrome c] + NH4(+) + 2 H2O = 6 Fe(II)-[cytochrome c] + nitrite + 8 H(+). It participates in nitrogen metabolism; nitrate reduction (assimilation). In terms of biological role, catalyzes the reduction of nitrite to ammonia, consuming six electrons in the process. The chain is Cytochrome c-552 from Haemophilus influenzae (strain ATCC 51907 / DSM 11121 / KW20 / Rd).